The following is a 216-amino-acid chain: Ras-related protein Rab-11A (216 aa).

N-acetylglycine is present on Gly2. GTP is bound by residues Ser20, Gly21, Val22, Gly23, Lys24, Ser25, Asn26, Asn37, Leu38, Ser40, Ser42, and Thr43. Ser25 contacts Mg(2+). The Switch 1 signature appears at 36–47 (FNLESKSTIGVE). Residues Thr43 and Asp66 each coordinate Mg(2+). Residues 67-86 (TAGQERYRAITSAYYRGAVG) carry the Switch 2 motif. Gly69, Asn124, Lys125, Asp127, Ala155, and Leu156 together coordinate GTP. The disordered stretch occupies residues 183–211 (DRRENDMSPSNNVVPIHVPPTTENKPKVQ). S-geranylgeranyl cysteine attachment occurs at residues Cys212 and Cys213. Position 213 is a cysteine methyl ester (Cys213). The propeptide at 214–216 (QNI) is removed in mature form.

The protein belongs to the small GTPase superfamily. Rab family. Interacts (GTP-bound form) with RAB11FIPs (via their C-termini) including RAB11FIP1, RAB11FIP2, RAB11FIP3, RAB11FIP4 and RAB11FIP5 effectors. Forms a complex with RAB11FIP3 and dynein intermediate chain DYNC1LI1; the interaction between RAB11A1 and RAB11FIP3 is direct; the complex regulates endocytic trafficking. Interacts with EVI5; EVI5 and RAB11FIP3 may be mutually exclusive and compete for binding RAB11A. Interacts with SGSM1, SGSM2, SGSM3 and VIPAS39. Interacts with EXOC6 in a GTP-dependent manner. Interacts with RAB11FIP5. Interacts with STXBP6. Interacts (GDP-bound form) with ZFYVE27. Interacts with BIRC6/bruce. May interact with TBC1D14. Interacts with UNC119; in a cell cycle-dependent manner. GDP-bound and nucleotide-free forms interact with SH3BP5. Interacts (GDP-bound form) with KIF5A in a ZFYVE27-dependent manner. Interacts (GDP-bound form) with RELCH. Found in a complex composed of RELCH, OSBP1 and RAB11A. Interacts with TBC1D12. Interacts with DEF6. Interacts with ATP9A. Forms a heterotetramer with RAB11FIP3; the GTP-bound form is preferred for binding. Forms a complex with Rabin8/RAB3IP and RAB11FIP3, probably a heterohexamer with two of each protein subunit, where Rabin8/RAB3IP and RAB11FIP3 simultaneously bind to RAB11A; the complex promotes preciliary trafficking and cilia growth. Forms a complex containing RAB11A, ASAP1, Rabin8/RAB3IP, RAP11FIP3 and ARF4; the complex promotes preciliary trafficking; the complex binds to RHO in photoreceptor cells and promotes RHO ciliary transport. Interacts (GTP-bound form) with WDR44; the interaction prevents RAB11A-RAB3IP-RAB11FIP3 complex formation. It depends on Mg(2+) as a cofactor. Detected in various tissues, such as brain, testis, spleen, and heart.

Its subcellular location is the cell membrane. It is found in the endosome membrane. It localises to the recycling endosome membrane. The protein resides in the cleavage furrow. The protein localises to the cytoplasmic vesicle. Its subcellular location is the phagosome. It is found in the cytoplasmic vesicle membrane. It localises to the golgi apparatus. The protein resides in the trans-Golgi network. It carries out the reaction GTP + H2O = GDP + phosphate + H(+). Its activity is regulated as follows. Regulated by guanine nucleotide exchange factors (GEFs) which promote the exchange of bound GDP for free GTP. Regulated by GTPase activating proteins (GAPs) which increase the GTP hydrolysis activity. Inhibited by GDP dissociation inhibitors (GDIs) which prevent Rab-GDP dissociation. In terms of biological role, the small GTPases Rab are key regulators of intracellular membrane trafficking, from the formation of transport vesicles to their fusion with membranes. Rabs cycle between an inactive GDP-bound form and an active GTP-bound form that is able to recruit to membranes different set of downstream effectors directly responsible for vesicle formation, movement, tethering and fusion. The small Rab GTPase RAB11A regulates endocytic recycling. Forms a functional Rab11/RAB11FIP3/dynein complex that regulates the movement of peripheral sorting endosomes (SE) along microtubule tracks toward the microtubule organizing center/centrosome, generating the endosomal recycling compartment (ERC). Acts as a major regulator of membrane delivery during cytokinesis. Together with MYO5B and RAB8A participates in epithelial cell polarization. Together with Rabin8/RAB3IP, RAB8A, the exocyst complex, PARD3, PRKCI, ANXA2, CDC42 and DNMBP promotes transcytosis of PODXL to the apical membrane initiation sites (AMIS), apical surface formation and lumenogenesis. Together with MYO5B participates in CFTR trafficking to the plasma membrane and TF (Transferrin) recycling in nonpolarized cells. Required in a complex with MYO5B and RAB11FIP2 for the transport of NPC1L1 to the plasma membrane. Participates in the sorting and basolateral transport of CDH1 from the Golgi apparatus to the plasma membrane. Regulates the recycling of FCGRT (receptor of Fc region of monomeric IgG) to basolateral membranes. May also play a role in melanosome transport and release from melanocytes. Promotes Rabin8/RAB3IP preciliary vesicular trafficking to mother centriole by forming a ciliary targeting complex containing Rab11, ASAP1, Rabin8/RAB3IP, RAB11FIP3 and ARF4, thereby regulating ciliogenesis initiation. On the contrary, upon LPAR1 receptor signaling pathway activation, interaction with phosphorylated WDR44 prevents Rab11-RAB3IP-RAB11FIP3 complex formation and cilia growth. Participates in the export of a subset of neosynthesized proteins through a Rab8-Rab10-Rab11-endososomal dependent export route via interaction with WDR44. This Rattus norvegicus (Rat) protein is Ras-related protein Rab-11A.